Reading from the N-terminus, the 804-residue chain is Ribonucleoside-diphosphate reductase large subunit-like protein (804 aa).

It belongs to the ribonucleoside diphosphate reductase large chain family.

It localises to the virion. The protein localises to the host cytoplasm. Functionally, does not possess a ribonucleotide reductase activity. Betaherpesviruses probably use another strategy to expand the dNTP pool in a quiescent host cell. The sequence is that of Ribonucleoside-diphosphate reductase large subunit-like protein from Homo sapiens (Human).